The sequence spans 71 residues: Large ribosomal subunit protein uL29 (71 aa).

It belongs to the universal ribosomal protein uL29 family.

This Rickettsia africae (strain ESF-5) protein is Large ribosomal subunit protein uL29.